A 546-amino-acid polypeptide reads, in one-letter code: NAD(P)H-quinone oxidoreductase chain 4 (546 aa).

A run of 14 helical transmembrane segments spans residues 24–44 (FPWLSISILFPIASAFLIPFF), 56–76 (FALSVALITFLVTVGAYINGF), 106–126 (ISMPLILLTSFITALAVLAAW), 132–152 (PKLFFFLILIMDGGQIAVFAV), 156–176 (LLFFLTWELELLPVYLLLAIW), 188–208 (FIIYTAGSSIFILLAALAMGF), 232–252 (ILCYIGLLIAFGVKLPIVPLH), 263–283 (TAPVHMLLAGILLKMGGYALL), 297–317 (FAPLLIVLGVVNIIYAALTSF), 326–346 (IAYSSISHMGFVLIGIGSFSS), 352–372 (AMLQMVSHGLIGASLFFLVGA), 396–416 (FALWTACSLASLALPGMSGFV), 437–457 (VVMASLAAVGVILTPIYLLSM), and 484–504 (VYIIACLLLPIIGIGLYPRLV).

This sequence belongs to the complex I subunit 4 family.

The protein localises to the cellular thylakoid membrane. It catalyses the reaction a plastoquinone + NADH + (n+1) H(+)(in) = a plastoquinol + NAD(+) + n H(+)(out). The enzyme catalyses a plastoquinone + NADPH + (n+1) H(+)(in) = a plastoquinol + NADP(+) + n H(+)(out). NDH-1 shuttles electrons from NAD(P)H, via FMN and iron-sulfur (Fe-S) centers, to quinones in the respiratory chain. The immediate electron acceptor for the enzyme in this species is believed to be plastoquinone. Couples the redox reaction to proton translocation (for every two electrons transferred, four hydrogen ions are translocated across the cytoplasmic membrane), and thus conserves the redox energy in a proton gradient. The polypeptide is NAD(P)H-quinone oxidoreductase chain 4 (Prochlorococcus marinus (strain MIT 9515)).